Reading from the N-terminus, the 275-residue chain is Ribosomal RNA small subunit methyltransferase A (275 aa).

Residues Asn28, Leu30, Gly55, Glu77, Asp103, and Asn123 each coordinate S-adenosyl-L-methionine.

It belongs to the class I-like SAM-binding methyltransferase superfamily. rRNA adenine N(6)-methyltransferase family. RsmA subfamily.

It localises to the cytoplasm. It carries out the reaction adenosine(1518)/adenosine(1519) in 16S rRNA + 4 S-adenosyl-L-methionine = N(6)-dimethyladenosine(1518)/N(6)-dimethyladenosine(1519) in 16S rRNA + 4 S-adenosyl-L-homocysteine + 4 H(+). In terms of biological role, specifically dimethylates two adjacent adenosines (A1518 and A1519) in the loop of a conserved hairpin near the 3'-end of 16S rRNA in the 30S particle. May play a critical role in biogenesis of 30S subunits. This is Ribosomal RNA small subunit methyltransferase A from Rhizobium johnstonii (strain DSM 114642 / LMG 32736 / 3841) (Rhizobium leguminosarum bv. viciae).